Here is a 340-residue protein sequence, read N- to C-terminus: Methionine import ATP-binding protein MetN 2 (340 aa).

The ABC transporter domain occupies 2 to 241 (ITLQNVVKEY…PQEKVTQRFV (240 aa)). 38 to 45 (GYSGAGKS) is a binding site for ATP.

It belongs to the ABC transporter superfamily. Methionine importer (TC 3.A.1.24) family. The complex is composed of two ATP-binding proteins (MetN), two transmembrane proteins (MetI) and a solute-binding protein (MetQ).

Its subcellular location is the cell membrane. It carries out the reaction L-methionine(out) + ATP + H2O = L-methionine(in) + ADP + phosphate + H(+). The enzyme catalyses D-methionine(out) + ATP + H2O = D-methionine(in) + ADP + phosphate + H(+). Part of the ABC transporter complex MetNIQ involved in methionine import. Responsible for energy coupling to the transport system. In Listeria monocytogenes serotype 4b (strain F2365), this protein is Methionine import ATP-binding protein MetN 2.